A 545-amino-acid chain; its full sequence is MSNKFKKILVTCALPYANGPIHIGHMLEHIQADIWVRYQRMRNNEVWFISSDDAHGTAIMLKSEKLGITPIKLIKKIKEEHIIDFSNFNISHDNYHSTHCVENLFLLRKIFLSLSEQKLINEKKIFQFYDNTKKMFLPDRFIKGTCPFCSSKNQNGDNCEICGSIYEPTDLVNPISVISNSVPILKNTTHLYFNLPLFTNMLNKWIHSGILEKSVAKKTEEWLKSGLKEWGISRDAPYFGFKIPKFDKKYFYVWLDAPVGYISAFKNFCTKNKKVDFNEFWKKESKCELYHFIGKDIIYFHTLFWPAILEASSYRKPNGIFVHGHLTINGLKLSKSRGFLIKASDWIKCFDSDSLRYYYASKLSNNINDIEINLEDFIQKINSDIVNKLVNLASRNASFIHKYFDGYLADSLGDCNLYQDFIDISKKIANFFENRQFSSVIRECMKLLDLANQYINQREPWKIKQDNFNKLHTICTVGINLFRLVVIFLKPIIPDLAKKTEYFLISDLTWKGIDKPLLSHKIKKFKKLYNRINHDKILQLSLLCK.

Positions 15–25 (PYANGPIHIGH) match the 'HIGH' region motif. Positions 146, 149, 159, and 162 each coordinate Zn(2+). A 'KMSKS' region motif is present at residues 332 to 336 (KLSKS). Lys-335 is an ATP binding site.

It belongs to the class-I aminoacyl-tRNA synthetase family. MetG type 1 subfamily. Monomer. Requires Zn(2+) as cofactor.

It is found in the cytoplasm. It catalyses the reaction tRNA(Met) + L-methionine + ATP = L-methionyl-tRNA(Met) + AMP + diphosphate. Its function is as follows. Is required not only for elongation of protein synthesis but also for the initiation of all mRNA translation through initiator tRNA(fMet) aminoacylation. The sequence is that of Methionine--tRNA ligase (metG) from Buchnera aphidicola subsp. Schizaphis graminum (strain Sg).